The following is a 246-amino-acid chain: MIIPALDIINGNIVRLYQGSYCMQTNYGEPISLLKEYIRQGAKMIHLVDLDGAKNPLKRQSLLISQLIKEANPLSKIQIGGGIRNASDVEILLESGATRIVLGSIAVTQPKIVKKWFEYFDPNTLVLAVDIHVYSEENRKVAIYGWQKETDLQLEQIIEEYYTVGLKHVICTDISKDGTLLGSNISLYRSICHAWPRIAFQSSGGVNKLSEISKLRSSGVAGIIIGRAFLENTFTINEAISCWQNE.

The active-site Proton acceptor is the Asp-7. The active-site Proton donor is Asp-130.

It belongs to the HisA/HisF family.

It localises to the cytoplasm. The enzyme catalyses 1-(5-phospho-beta-D-ribosyl)-5-[(5-phospho-beta-D-ribosylamino)methylideneamino]imidazole-4-carboxamide = 5-[(5-phospho-1-deoxy-D-ribulos-1-ylimino)methylamino]-1-(5-phospho-beta-D-ribosyl)imidazole-4-carboxamide. It functions in the pathway amino-acid biosynthesis; L-histidine biosynthesis; L-histidine from 5-phospho-alpha-D-ribose 1-diphosphate: step 4/9. The chain is 1-(5-phosphoribosyl)-5-[(5-phosphoribosylamino)methylideneamino] imidazole-4-carboxamide isomerase from Blochmanniella pennsylvanica (strain BPEN).